A 121-amino-acid chain; its full sequence is UPF0102 protein HRM2_30940 (121 aa).

This sequence belongs to the UPF0102 family.

The chain is UPF0102 protein HRM2_30940 from Desulforapulum autotrophicum (strain ATCC 43914 / DSM 3382 / VKM B-1955 / HRM2) (Desulfobacterium autotrophicum).